We begin with the raw amino-acid sequence, 203 residues long: UPF0637 protein EF_3078 (203 aa).

Belongs to the UPF0637 family.

The sequence is that of UPF0637 protein EF_3078 from Enterococcus faecalis (strain ATCC 700802 / V583).